A 129-amino-acid polypeptide reads, in one-letter code: 8-oxo-dGTP diphosphatase (129 aa).

The Nudix hydrolase domain maps to 1–129 (MKKLQIAVGI…EPVIAKLKRL (129 aa)). 8-oxo-dGTP contacts are provided by residues arginine 23, histidine 28, and 34–37 (EFPG). Mg(2+) contacts are provided by glycine 37 and glutamate 57. Residues 38 to 59 (GKIEMGETPEQAVVRELQEEVG) carry the Nudix box motif. 8-oxo-dGTP is bound at residue asparagine 119.

It belongs to the Nudix hydrolase family. As to quaternary structure, monomer. Mg(2+) serves as cofactor.

The enzyme catalyses 8-oxo-dGTP + H2O = 8-oxo-dGMP + diphosphate + H(+). It carries out the reaction 8-oxo-GTP + H2O = 8-oxo-GMP + diphosphate + H(+). It catalyses the reaction 8-oxo-dGDP + H2O = 8-oxo-dGMP + phosphate + H(+). The catalysed reaction is 8-oxo-GDP + H2O = 8-oxo-GMP + phosphate + H(+). Its function is as follows. Specifically hydrolyzes both 8-oxo-deoxyguanosine triphosphate (8-oxo-dGTP) and 8-oxo-guanosine triphosphate (8-oxo-GTP) to the related monophosphates, thereby cleaning up the nucleotide pools and preventing misincorporation of 8-oxoGua into DNA and RNA. It prevents replicational errors by removing an oxidatively damaged form of guanine (8-oxo-dGTP) from DNA and the nucleotide pool. 8-oxo-dGTP can be inserted opposite dA and dC residues of template DNA with almost equal efficiency thus leading to A.T to G.C transversions. MutT may also ensure transcriptional fidelity, removing 8-oxo-GTP from the ribonucleotide triphosphate pool. However, due to the lower efficiency of RNA polymerase 8-oxo-GTP incorporation, MutT is probably not a major contributor to transcriptional fidelity. It also hydrolyzes 8-oxo-dGDP and 8-oxo-GDP to their monophosphate form. In vitro, can also use dGTP, dGDP and other various nucleoside di- and triphosphates, with much lower efficiency. Works cooperatively with MutM and MutY to prevent accumulation in the DNA of oxidized guanine residues. The sequence is that of 8-oxo-dGTP diphosphatase from Escherichia coli (strain K12).